We begin with the raw amino-acid sequence, 660 residues long: Bifunctional polymyxin resistance protein ArnA (660 aa).

Residues M1–L304 are formyltransferase ArnAFT. The active-site Proton donor; for formyltransferase activity is the H104. Residues R114 and V136 to D140 each bind (6R)-10-formyltetrahydrofolate. A dehydrogenase ArnADH region spans residues R314–E660. NAD(+) contacts are provided by residues D347 and D368–I369. UDP-alpha-D-glucuronate-binding positions include A393, Y398, and T432–S433. E434 functions as the Proton acceptor; for decarboxylase activity in the catalytic mechanism. Residues R460, N492, K526 to R535, and Y613 contribute to the UDP-alpha-D-glucuronate site. The active-site Proton donor; for decarboxylase activity is the R619.

This sequence in the N-terminal section; belongs to the Fmt family. UDP-L-Ara4N formyltransferase subfamily. The protein in the C-terminal section; belongs to the NAD(P)-dependent epimerase/dehydratase family. UDP-glucuronic acid decarboxylase subfamily. In terms of assembly, homohexamer, formed by a dimer of trimers.

The enzyme catalyses UDP-alpha-D-glucuronate + NAD(+) = UDP-beta-L-threo-pentopyranos-4-ulose + CO2 + NADH. The catalysed reaction is UDP-4-amino-4-deoxy-beta-L-arabinose + (6R)-10-formyltetrahydrofolate = UDP-4-deoxy-4-formamido-beta-L-arabinose + (6S)-5,6,7,8-tetrahydrofolate + H(+). The protein operates within nucleotide-sugar biosynthesis; UDP-4-deoxy-4-formamido-beta-L-arabinose biosynthesis; UDP-4-deoxy-4-formamido-beta-L-arabinose from UDP-alpha-D-glucuronate: step 1/3. It participates in nucleotide-sugar biosynthesis; UDP-4-deoxy-4-formamido-beta-L-arabinose biosynthesis; UDP-4-deoxy-4-formamido-beta-L-arabinose from UDP-alpha-D-glucuronate: step 3/3. It functions in the pathway bacterial outer membrane biogenesis; lipopolysaccharide biosynthesis. Bifunctional enzyme that catalyzes the oxidative decarboxylation of UDP-glucuronic acid (UDP-GlcUA) to UDP-4-keto-arabinose (UDP-Ara4O) and the addition of a formyl group to UDP-4-amino-4-deoxy-L-arabinose (UDP-L-Ara4N) to form UDP-L-4-formamido-arabinose (UDP-L-Ara4FN). The modified arabinose is attached to lipid A and is required for resistance to polymyxin and cationic antimicrobial peptides. This Erwinia tasmaniensis (strain DSM 17950 / CFBP 7177 / CIP 109463 / NCPPB 4357 / Et1/99) protein is Bifunctional polymyxin resistance protein ArnA.